A 313-amino-acid polypeptide reads, in one-letter code: Protein FixB (313 aa).

255–283 provides a ligand contact to FAD; the sequence is LYLAVGISGQIQHMVGANASQTIFAINKD.

The protein belongs to the ETF alpha-subunit/FixB family. Heterodimer of FixA and FixB.

The protein operates within amine and polyamine metabolism; carnitine metabolism. Functionally, required for anaerobic carnitine reduction. May bring reductant to CaiA. The protein is Protein FixB of Escherichia coli O139:H28 (strain E24377A / ETEC).